The chain runs to 53 residues: Small, acid-soluble spore protein K (53 aa).

Residues 1–53 (MRNKAHNFPNQNNNKLEGEPRAKAEYASKRADGTTNTHPQERMRASGERSDFF) are disordered. Basic and acidic residues-rich tracts occupy residues 16-32 (LEGEPRAKAEYASKRAD) and 39-53 (PQERMRASGERSDFF).

Belongs to the SspK family.

The protein localises to the spore core. This chain is Small, acid-soluble spore protein K, found in Geobacillus kaustophilus (strain HTA426).